Reading from the N-terminus, the 85-residue chain is Small ribosomal subunit protein bS18 (85 aa).

The protein belongs to the bacterial ribosomal protein bS18 family. In terms of assembly, part of the 30S ribosomal subunit. Forms a tight heterodimer with protein bS6.

Its function is as follows. Binds as a heterodimer with protein bS6 to the central domain of the 16S rRNA, where it helps stabilize the platform of the 30S subunit. This Helicobacter acinonychis (strain Sheeba) protein is Small ribosomal subunit protein bS18.